A 562-amino-acid polypeptide reads, in one-letter code: Arginine--tRNA ligase (562 aa).

The 'HIGH' region signature appears at 129–139 (ANPTGPLHVGH).

It belongs to the class-I aminoacyl-tRNA synthetase family. As to quaternary structure, monomer.

It is found in the cytoplasm. The enzyme catalyses tRNA(Arg) + L-arginine + ATP = L-arginyl-tRNA(Arg) + AMP + diphosphate. The chain is Arginine--tRNA ligase from Xylella fastidiosa (strain M12).